Reading from the N-terminus, the 55-residue chain is Large ribosomal subunit protein bL33 (55 aa).

This sequence belongs to the bacterial ribosomal protein bL33 family.

The sequence is that of Large ribosomal subunit protein bL33 from Mesorhizobium japonicum (strain LMG 29417 / CECT 9101 / MAFF 303099) (Mesorhizobium loti (strain MAFF 303099)).